The following is a 95-amino-acid chain: Large ribosomal subunit protein bL25 (95 aa).

Belongs to the bacterial ribosomal protein bL25 family. In terms of assembly, part of the 50S ribosomal subunit; part of the 5S rRNA/L5/L18/L25 subcomplex. Contacts the 5S rRNA. Binds to the 5S rRNA independently of L5 and L18.

Its function is as follows. This is one of the proteins that binds to the 5S RNA in the ribosome where it forms part of the central protuberance. This Haemophilus ducreyi (strain 35000HP / ATCC 700724) protein is Large ribosomal subunit protein bL25.